A 453-amino-acid chain; its full sequence is V-type proton ATPase subunit B (453 aa).

Position 341 (Arg-341) interacts with ATP.

It belongs to the ATPase alpha/beta chains family. In terms of assembly, V-ATPase is a heteromultimeric enzyme made up of two complexes: the ATP-hydrolytic V1 complex and the proton translocation V0 complex. The V1 complex consists of three catalytic AB heterodimers that form a heterohexamer, three peripheral stalks each consisting of EG heterodimers, one central rotor including subunits D and F, and the regulatory subunits C and H. The proton translocation complex V0 consists of the proton transport subunit a, a ring of proteolipid subunits c9c'', rotary subunit d, subunits e and f, and two accessory subunits.

Its function is as follows. Non-catalytic subunit of the V1 complex of vacuolar(H+)-ATPase (V-ATPase), a multisubunit enzyme composed of a peripheral complex (V1) that hydrolyzes ATP and a membrane integral complex (V0) that translocates protons. V-ATPase is responsible for acidifying and maintaining the pH of intracellular compartments and in some cell types, is targeted to the plasma membrane, where it is responsible for acidifying the extracellular environment. Essential for the proper assembly and activity of V-ATPase. This chain is V-type proton ATPase subunit B (ATP6V1B), found in Gallus gallus (Chicken).